Consider the following 43-residue polypeptide: Protein PsbN (43 aa).

The chain crosses the membrane as a helical span at residues 4–24 (GILIVIFISCLLVSFTGYAVY).

The protein belongs to the PsbN family.

Its subcellular location is the plastid. It localises to the chloroplast thylakoid membrane. In terms of biological role, may play a role in photosystem I and II biogenesis. This is Protein PsbN from Coleochaete orbicularis (Charophycean green alga).